A 177-amino-acid chain; its full sequence is ATP synthase subunit delta (177 aa).

It belongs to the ATPase delta chain family. As to quaternary structure, F-type ATPases have 2 components, F(1) - the catalytic core - and F(0) - the membrane proton channel. F(1) has five subunits: alpha(3), beta(3), gamma(1), delta(1), epsilon(1). F(0) has three main subunits: a(1), b(2) and c(10-14). The alpha and beta chains form an alternating ring which encloses part of the gamma chain. F(1) is attached to F(0) by a central stalk formed by the gamma and epsilon chains, while a peripheral stalk is formed by the delta and b chains.

The protein resides in the cell inner membrane. Its function is as follows. F(1)F(0) ATP synthase produces ATP from ADP in the presence of a proton or sodium gradient. F-type ATPases consist of two structural domains, F(1) containing the extramembraneous catalytic core and F(0) containing the membrane proton channel, linked together by a central stalk and a peripheral stalk. During catalysis, ATP synthesis in the catalytic domain of F(1) is coupled via a rotary mechanism of the central stalk subunits to proton translocation. In terms of biological role, this protein is part of the stalk that links CF(0) to CF(1). It either transmits conformational changes from CF(0) to CF(1) or is implicated in proton conduction. In Aeromonas salmonicida (strain A449), this protein is ATP synthase subunit delta.